The chain runs to 226 residues: Calcium-binding protein 1 (226 aa).

Residue G2 is the site of N-myristoyl glycine attachment. A lipid anchor (S-palmitoyl cysteine) is attached at C4. EF-hand domains are found at residues 81 to 116 (EEIEELREAFREFDKDKDGYINCRDLGNCMRTMGYM), 135 to 152 (GHVDFDDFVELMGPKLLA), 158 to 193 (IGVKELRDAFREFDTNGDGEISTSELREAMRKLLGH), and 195 to 226 (VGHRDIEEIIRDVDLNGDGRVDFEEFVRMMSR). Ca(2+) is bound by residues D94, D96, D98, Y100, and D105. Positions 171, 173, 175, and 177 each coordinate Ca(2+). S179 bears the Phosphoserine mark. Residues E182, D208, N210, D212, R214, and E219 each coordinate Ca(2+).

Homodimer. Interacts (via C-terminus) with ITPR1, ITPR2 and ITPR3. This binding is calcium dependent and the interaction correlates with calcium concentration. An additional calcium-independent interaction with the N-terminus of ITPR1 results in a decreased InsP(3) binding to the receptor. Interacts with CACNA1A (via C-terminal CDB motif) in the pre- and postsynaptic membranes. Interacts with CACNA1C (via C-terminal C and IQ motifs). Interacts with CACNA1D. The binding to the C motif is calcium independent whereas the binding to IQ requires the presence of calcium and is mutually exclusive with calmodulin binding. Interacts with TRPC5 (via C-terminus). Interacts (via EF-hands 1 and 2) at microtubules with MAP1LC3B. Interacts with MYO1C. Interacts (via EF-hands 1 and 2) with NSMF (via the central NLS-containing motif region), the interaction occurs in a calcium dependent manner after synaptic NMDA receptor stimulation and prevents nuclear import of NSMF. Interacts with SPACA9. In terms of processing, phosphorylated. The phosphorylation regulates the activity.

It is found in the cytoplasm. Its subcellular location is the cytoskeleton. It localises to the perinuclear region. The protein resides in the cell membrane. The protein localises to the golgi apparatus. It is found in the postsynaptic density. Its function is as follows. Modulates calcium-dependent activity of inositol 1,4,5-triphosphate receptors (ITPRs). Inhibits agonist-induced intracellular calcium signaling. Enhances inactivation and does not support calcium-dependent facilitation of voltage-dependent P/Q-type calcium channels. Causes calcium-dependent facilitation and inhibits inactivation of L-type calcium channels by binding to the same sites as calmodulin in the C-terminal domain of CACNA1C, but has an opposite effect on channel function. Suppresses the calcium-dependent inactivation of CACNA1D. Inhibits TRPC5 channels. Prevents NMDA receptor-induced cellular degeneration. Required for the normal transfer of light signals through the retina. The protein is Calcium-binding protein 1 (CABP1) of Bos taurus (Bovine).